Reading from the N-terminus, the 73-residue chain is MNQPVVETAELMRRVEQLVDAAANRYRITVQVANRAKRRRYEDLNDDDGNFKPVLRAIFEMSDEMNEPEIIGD.

Belongs to the RNA polymerase subunit omega family. In cyanobacteria the RNAP catalytic core is composed of 2 alpha, 1 beta, 1 beta', 1 gamma and 1 omega subunit. When a sigma factor is associated with the core the holoenzyme is formed, which can initiate transcription.

The enzyme catalyses RNA(n) + a ribonucleoside 5'-triphosphate = RNA(n+1) + diphosphate. Its function is as follows. Promotes RNA polymerase assembly. Latches the N- and C-terminal regions of the beta' subunit thereby facilitating its interaction with the beta and alpha subunits. This is DNA-directed RNA polymerase subunit omega from Gloeobacter violaceus (strain ATCC 29082 / PCC 7421).